The chain runs to 210 residues: Putative biopolymer transport protein ExbB-like 3 (210 aa).

3 helical membrane-spanning segments follow: residues 2-22, 104-124, and 152-172; these read AGGIVAVPLLGFSLLAVALII, LFQTIITVSPLLGLLGTILGL, and LVSTVMGLVVAIATLLFANVF.

The protein belongs to the ExbB/TolQ family.

The protein resides in the cell inner membrane. Functionally, involved in the TonB-dependent energy-dependent transport of various receptor-bound substrates. Protects ExbD from proteolytic degradation and functionally stabilizes TonB. This is Putative biopolymer transport protein ExbB-like 3 from Synechocystis sp. (strain ATCC 27184 / PCC 6803 / Kazusa).